We begin with the raw amino-acid sequence, 315 residues long: DNA-directed RNA polymerase subunit alpha (315 aa).

Residues 1-228 (MIEIEKPKIE…EHLNLFIDLS (228 aa)) are alpha N-terminal domain (alpha-NTD). An alpha C-terminal domain (alpha-CTD) region spans residues 245–315 (KEKVLEMTIE…LGLSLAPSED (71 aa)).

The protein belongs to the RNA polymerase alpha chain family. Homodimer. The RNAP catalytic core consists of 2 alpha, 1 beta, 1 beta' and 1 omega subunit. When a sigma factor is associated with the core the holoenzyme is formed, which can initiate transcription.

It carries out the reaction RNA(n) + a ribonucleoside 5'-triphosphate = RNA(n+1) + diphosphate. Its function is as follows. DNA-dependent RNA polymerase catalyzes the transcription of DNA into RNA using the four ribonucleoside triphosphates as substrates. The sequence is that of DNA-directed RNA polymerase subunit alpha from Acetivibrio thermocellus (strain ATCC 27405 / DSM 1237 / JCM 9322 / NBRC 103400 / NCIMB 10682 / NRRL B-4536 / VPI 7372) (Clostridium thermocellum).